The following is a 429-amino-acid chain: Adenylosuccinate synthetase (429 aa).

GTP-binding positions include 12-18 and 40-42; these read GDEGKGK and GHT. The active-site Proton acceptor is D13. Mg(2+)-binding residues include D13 and G40. IMP contacts are provided by residues 13–16, 38–41, T128, R142, Q223, T238, and R302; these read DEGK and NAGH. H41 functions as the Proton donor in the catalytic mechanism. Residue 298–304 participates in substrate binding; it reads VNTGRPR. GTP-binding positions include R304, 330–332, and 412–414; these read KLD and GVG.

It belongs to the adenylosuccinate synthetase family. Homodimer. The cofactor is Mg(2+).

The protein resides in the cytoplasm. It carries out the reaction IMP + L-aspartate + GTP = N(6)-(1,2-dicarboxyethyl)-AMP + GDP + phosphate + 2 H(+). The protein operates within purine metabolism; AMP biosynthesis via de novo pathway; AMP from IMP: step 1/2. Functionally, plays an important role in the de novo pathway of purine nucleotide biosynthesis. Catalyzes the first committed step in the biosynthesis of AMP from IMP. This Kocuria rhizophila (strain ATCC 9341 / DSM 348 / NBRC 103217 / DC2201) protein is Adenylosuccinate synthetase.